Here is an 818-residue protein sequence, read N- to C-terminus: Auxin response factor 12 (818 aa).

The segment covering 1–10 has biased composition (low complexity); the sequence is MSSSSAASIG. Residues 1–24 form a disordered region; that stretch reads MSSSSAASIGPPQPPPPPAPPEEE. Pro residues predominate over residues 11–20; it reads PPQPPPPPAP. Positions 135-237 form a DNA-binding region, TF-B3; sequence FCKTLTASDT…QLLLGIRRAS (103 aa). Disordered regions lie at residues 526–565 and 629–648; these read NDQK…FSDP and GSVL…NKIG. The segment covering 629 to 640 has biased composition (polar residues); the sequence is GSVLHNSPTSKD. The PB1 domain occupies 719–803; it reads RTFVKVYKSG…WYIKILSPED (85 aa).

Belongs to the ARF family. As to quaternary structure, homodimers and heterodimers. Expressed in roots, culms, leaves and young panicles.

It is found in the nucleus. Its function is as follows. Auxin response factors (ARFs) are transcriptional factors that bind specifically to the DNA sequence 5'-TGTCTC-3' found in the auxin-responsive promoter elements (AuxREs). This Oryza sativa subsp. japonica (Rice) protein is Auxin response factor 12 (ARF12).